Here is a 418-residue protein sequence, read N- to C-terminus: cAMP-dependent protein kinase type II-beta regulatory subunit (418 aa).

Positions 2-153 are dimerization and phosphorylation; the sequence is SIEIPAGLTE…RLQEACKDIL (152 aa). The segment covering 48–57 has biased composition (basic and acidic residues); the sequence is TARFGHEGRT. The segment at 48-96 is disordered; that stretch reads TARFGHEGRTWGDLGAAAGGGTPSKGVNFAEEPMQSDSEDGEEEEAAPA. Thr-69 bears the Phosphothreonine mark. A phosphoserine mark is found at Ser-83, Ser-85, and Ser-114. The span at 84–94 shows a compositional bias: acidic residues; the sequence is DSEDGEEEEAA. 3',5'-cyclic AMP is bound by residues 154-275, Glu-223, Arg-232, 276-418, Glu-352, and Arg-361; these read LFKN…ESLP and FLKS…EPTA.

It belongs to the cAMP-dependent kinase regulatory chain family. In terms of assembly, the inactive form of the enzyme is composed of two regulatory chains and two catalytic chains. Activation by cAMP produces two active catalytic monomers and a regulatory dimer that binds four cAMP molecules. Interacts with PRKACA and PRKACB. Interacts with the phosphorylated form of PJA2. Forms a complex composed of PRKAR2B, GSK3B and GSKIP through GSKIP interaction; facilitates PKA-induced phosphorylation and regulates GSK3B activity. In terms of processing, phosphorylated by the activated catalytic chain. In terms of tissue distribution, four types of regulatory chains are found: I-alpha, I-beta, II-alpha, and II-beta. Their expression varies among tissues and is in some cases constitutive and in others inducible.

The protein resides in the cytoplasm. The protein localises to the cell membrane. In terms of biological role, regulatory subunit of the cAMP-dependent protein kinases involved in cAMP signaling in cells. Type II regulatory chains mediate membrane association by binding to anchoring proteins, including the MAP2 kinase. This chain is cAMP-dependent protein kinase type II-beta regulatory subunit (PRKAR2B), found in Homo sapiens (Human).